We begin with the raw amino-acid sequence, 391 residues long: RAB6A-GEF complex partner protein 2 (391 aa).

This sequence belongs to the RGP1 family. In terms of assembly, forms a complex with RIC1; the interaction enhances RAB6A GTPase activity. Interacts with RIC1. Interacts with RAB6A; the interaction is direct with a preference for RAB6A-GDP. Interacts with RAB33B.

Its subcellular location is the cytoplasm. The protein resides in the cytosol. It is found in the membrane. Its function is as follows. The RIC1-RGP1 complex acts as a guanine nucleotide exchange factor (GEF), which activates RAB6A by exchanging bound GDP for free GTP and may thereby required for efficient fusion of endosome-derived vesicles with the Golgi compartment. The RIC1-RGP1 complex participates in the recycling of mannose-6-phosphate receptors. The polypeptide is RAB6A-GEF complex partner protein 2 (Homo sapiens (Human)).